A 140-amino-acid chain; its full sequence is Flagellar assembly factor FliW (140 aa).

Belongs to the FliW family. Interacts with translational regulator CsrA and flagellin(s).

The protein localises to the cytoplasm. In terms of biological role, acts as an anti-CsrA protein, binds CsrA and prevents it from repressing translation of its target genes, one of which is flagellin. Binds to flagellin and participates in the assembly of the flagellum. The sequence is that of Flagellar assembly factor FliW from Syntrophotalea carbinolica (strain DSM 2380 / NBRC 103641 / GraBd1) (Pelobacter carbinolicus).